Consider the following 396-residue polypeptide: MSERKLFTSESVSEGHPDKIADQISDAILDAILAEDPDAHVAAETAVYTGSVHVFGEISTTAYVDINRVVRDTIAEIGYTKGEYGFSAESVGVHPSLVEQSPDIAQGVNEALETRQDASQDPLDLIGAGDQGLMFGFAVDETPELMPLPISLSHKLVRRLAELRKSGEIAYLRPDAKSQVTVEYDEDNQPVRVDTVVISTQHDPEVSQEQIRQDVIERVIKEIIPAHYLDDQTNYFINPTGRFVIGGPQGDSGLTGRKIIVDTYGGYSRHGGGAFSGKDATKVDRSASYAARYIAKNIVAAGLAKKAEVQLAYAIGVAHPVSVRIDTFGTSTVAESKLEAAVRHIFDLRPAGIIQMLDLKRPIYKQTAAYGHMGRTDIDLPWEKLDKVEALKTAVL.

His16 is an ATP binding site. Residue Asp18 coordinates Mg(2+). Residue Glu44 coordinates K(+). L-methionine-binding residues include Glu57 and Gln100. The segment at 100 to 110 (QSPDIAQGVNE) is flexible loop. Residues 175–177 (DAK), 242–243 (RF), Asp251, 257–258 (RK), Ala274, and Lys278 each bind ATP. Asp251 contacts L-methionine. Lys282 lines the L-methionine pocket.

This sequence belongs to the AdoMet synthase family. In terms of assembly, homotetramer; dimer of dimers. Mg(2+) serves as cofactor. It depends on K(+) as a cofactor.

The protein resides in the cytoplasm. The enzyme catalyses L-methionine + ATP + H2O = S-adenosyl-L-methionine + phosphate + diphosphate. Its pathway is amino-acid biosynthesis; S-adenosyl-L-methionine biosynthesis; S-adenosyl-L-methionine from L-methionine: step 1/1. Its function is as follows. Catalyzes the formation of S-adenosylmethionine (AdoMet) from methionine and ATP. The overall synthetic reaction is composed of two sequential steps, AdoMet formation and the subsequent tripolyphosphate hydrolysis which occurs prior to release of AdoMet from the enzyme. This is S-adenosylmethionine synthase from Streptococcus suis (strain 05ZYH33).